The chain runs to 544 residues: Chaperonin GroEL 1 (544 aa).

ATP is bound by residues 30-33, Lys-51, 87-91, Gly-415, 481-483, and Asp-497; these read TLGP, DGTTT, and DAL.

Belongs to the chaperonin (HSP60) family. In terms of assembly, forms a cylinder of 14 subunits composed of two heptameric rings stacked back-to-back. Interacts with the co-chaperonin GroES.

The protein localises to the cytoplasm. It carries out the reaction ATP + H2O + a folded polypeptide = ADP + phosphate + an unfolded polypeptide.. Together with its co-chaperonin GroES, plays an essential role in assisting protein folding. The GroEL-GroES system forms a nano-cage that allows encapsulation of the non-native substrate proteins and provides a physical environment optimized to promote and accelerate protein folding. In Chlamydia pneumoniae (Chlamydophila pneumoniae), this protein is Chaperonin GroEL 1.